Here is a 908-residue protein sequence, read N- to C-terminus: MAKNNHISASGNSTSGDHRLKEEVLTPTTSASTPHRIFSVDDDPKEIQNDIRYLEGLHEGLKFALHANKSKRSVSSQSPIVHSSNNTLHHHEHQQHLPPTLESLSSKSHSVPDLNTATPSSPKRMHSSIRELPHDDNDDEDANDDSRFIIHDSHGHDLLIDEINCQSPSHLENNDQASNASSTESFTLRERQDAINETHPFGIRIWKPALYKKHRSVQRTAAQDIHETQLKTITWEVTCSNVLWFILFGFPIAILFYSAAIVVFLLGGGGLVTNSAKEYSKCLYKLANYFLWPFGKMVYLLQDEQYLQEDKDEGISMQQFYNWVTSYSNRLVFHQSQAKFQQREDHPAPATESSSLMPPANTTATPLNSNHPSYNSIRHEIPHAAAQRRYFGRGKWSWGRVLFYTIFHLVLQPILAVLSLCLWLLVFTIPMSNVLWQIMYHCRRHPLALGFKYVENSSQSHENEITQQQLNKNILLCTFRAAGWHYYKYTVDGTNVIVVNLISIVFFTIFDFYVLKNFLHWKTWFTYESSIFILCLTSTIPLAFYIGQAVASISAQTSMGVGAVINAFFSTIVEIFLYCVALQQKKGLLVEGSMIGSILGAVLLLPGLSMCGGALNRKTQRYNPASAGVSSALLIFSMIVMFVPTVLYEIYGGYSVNCADGANDRDCTFSHPPLKFNRLFTHVIQPMSISCAIVLFCAYIIGLWFTLRTHAKMIWQLPIADPTSTAPEQQEQNSHDAPNWSRSKSTCILLMSTLLYAIIAEILVSCVDAVLEDIPSLNPKFLGLTIFALIPNTTEFLNAISFAIHGNVALSMEIGSAYALQVCLLQIPSLVIYSIFYTWNVKKSMINIRTQMFPLVFPRWDIFGAMTSVFMFTYLYAEGKSNYFKGSMLILLYIIIVVGFYFQGALSE.

The segment covering M1–S15 has biased composition (polar residues). Positions M1–L20 are disordered. Residues M1–W244 are Cytoplasmic-facing. T26 is subject to Phosphothreonine. S32 bears the Phosphoserine mark. T33 carries the phosphothreonine modification. The disordered stretch occupies residues N68 to R147. A compositionally biased stretch (low complexity) spans S73–T87. Over residues E102–S121 the composition is skewed to polar residues. S110 is subject to Phosphoserine. T118 carries the phosphothreonine modification. Phosphoserine is present on S121. A helical membrane pass occupies residues F245 to L265. The Vacuolar segment spans residues L266–H408. N-linked (GlcNAc...) asparagine glycosylation is present at N361. A helical transmembrane segment spans residues L409–I429. The Cytoplasmic portion of the chain corresponds to P430–T494. Residues N495–L515 form a helical membrane-spanning segment. The Vacuolar portion of the chain corresponds to K516–S530. Residues I531–A551 form a helical membrane-spanning segment. The Cytoplasmic segment spans residues S552–G560. A helical transmembrane segment spans residues V561–A581. The Vacuolar segment spans residues L582–G587. The chain crosses the membrane as a helical span at residues L588–L608. The Cytoplasmic portion of the chain corresponds to S609–S626. A helical transmembrane segment spans residues A627–L647. Residues Y648 to P686 lie on the Vacuolar side of the membrane. The helical transmembrane segment at M687–L707 threads the bilayer. Topologically, residues R708–T746 are cytoplasmic. Residues C747–V767 traverse the membrane as a helical segment. Residues D768 to G783 are Vacuolar-facing. The helical transmembrane segment at L784 to I804 threads the bilayer. Residues H805–S816 lie on the Cytoplasmic side of the membrane. The chain crosses the membrane as a helical span at residues A817–Y837. Residues T838–Q851 are Vacuolar-facing. A helical transmembrane segment spans residues M852–F872. The Cytoplasmic portion of the chain corresponds to T873–K885. Residues G886–L906 traverse the membrane as a helical segment. The Vacuolar segment spans residues S907–E908.

This sequence belongs to the Ca(2+):cation antiporter (CaCA) (TC 2.A.19) family.

Its subcellular location is the vacuole membrane. Its function is as follows. Has a role in promoting intracellular monovalent cation sequestration via the exchange of monovalent cations and especially Na(+) for hydrogen ions across the vacuolar membrane. The protein is Low affinity vacuolar monovalent cation/H(+) antiporter (VNX1) of Saccharomyces cerevisiae (strain ATCC 204508 / S288c) (Baker's yeast).